The primary structure comprises 211 residues: Interleukin-6 (211 aa).

A signal peptide spans 1–24 (MKFLSARDFHPVAFLGLMLVTTTA). Intrachain disulfides connect C70–C76 and C99–C109.

The protein belongs to the IL-6 superfamily. Component of a hexamer of two molecules each of IL6, IL6R and IL6ST; first binds to IL6R to associate with the signaling subunit IL6ST. Interacts with IL6R (via the N-terminal ectodomain); this interaction may be affected by IL6R-binding with SORL1, hence decreasing IL6 cis signaling. Interacts with SORL1 (via the N-terminal ectodomain); this interaction leads to IL6 internalization and lysosomal degradation. May form a trimeric complex with the soluble SORL1 ectodomain and soluble IL6R receptor; this interaction might stabilize circulating IL6, hence promoting IL6 trans signaling. In terms of processing, N- and O-glycosylated. Expressed by dendritic cells and macrophages. Expressed by activated follicular B cells. Abundantly expressed in the central nervous system (CNS), particularly the hypothalamic region.

Its subcellular location is the secreted. Its function is as follows. Cytokine with a wide variety of biological functions in immunity, tissue regeneration, and metabolism. Binds to IL6R, then the complex associates to the signaling subunit IL6ST/gp130 to trigger the intracellular IL6-signaling pathway. The interaction with the membrane-bound IL6R and IL6ST stimulates 'classic signaling', whereas the binding of IL6 and soluble IL6R to IL6ST stimulates 'trans-signaling'. Alternatively, 'cluster signaling' occurs when membrane-bound IL6:IL6R complexes on transmitter cells activate IL6ST receptors on neighboring receiver cells. In terms of biological role, IL6 is a potent inducer of the acute phase response. Rapid production of IL6 contributes to host defense during infection and tissue injury, but excessive IL6 synthesis is involved in disease pathology. In the innate immune response, is synthesized by myeloid cells, such as macrophages and dendritic cells, upon recognition of pathogens through toll-like receptors (TLRs) at the site of infection or tissue injury. In the adaptive immune response, is required for the differentiation of B-cells into immunoglolin-secreting cells. Plays a major role in the differentiation of CD4(+) T cell subsets. Essential factor for the development of T follicular helper (Tfh) cells that are required for the induction of germinal-center formation. Together with IL21, controls the early generation of Tfh cells and are critical for an effective antibody response to acute viral infection. Required to drive naive CD4(+) T cells to the Th17 lineage, through 'cluster signaling' by dendritic cells. Also required for proliferation of myeloma cells and the survival of plasmablast cells. Acts as an essential factor in bone homeostasis and on vessels directly or indirectly by induction of VEGF, resulting in increased angiogenesis activity and vascular permeability. Induces, through 'trans-signaling' and synergistically with IL1B and TNF, the production of VEGF. Involved in metabolic controls, is discharged into the bloodstream after muscle contraction increasing lipolysis and improving insulin resistance. 'Trans-signaling' in central nervous system regulates energy and glucose homeostasis. Mediates, through GLP-1, crosstalk between insulin-sensitive tissues, intestinal L cells and pancreatic islets to adapt to changes in insulin demand. Also acts as a myokine. Plays a protective role during liver injury, being required for maintenance of tissue regeneration. Also has a pivotal role in iron metabolism by regulating HAMP/hepcidin expression upon inflammation or bacterial infection. Through activation of IL6ST-YAP-NOTCH pathway, induces inflammation-induced epithelial regeneration. This Mus musculus (Mouse) protein is Interleukin-6.